The primary structure comprises 443 residues: Glutamine synthetase (443 aa).

Positions 16–101 (NGVKFIRLQF…LICDVYKPDG (86 aa)) constitute a GS beta-grasp domain. Positions 108-443 (PRHVLKRANA…WELENYLNKY (336 aa)) constitute a GS catalytic domain. Mg(2+) contacts are provided by Glu131 and Glu133. Glu183 provides a ligand contact to ATP. Glu188 and Glu195 together coordinate Mg(2+). Residues 239–240 (NG) and Gly240 contribute to the L-glutamate site. His244 contacts Mg(2+). Ser248 serves as a coordination point for ATP. L-glutamate contacts are provided by Arg297, Glu303, and Arg315. ATP-binding residues include Arg315 and Arg320. Glu332 contributes to the Mg(2+) binding site. An L-glutamate-binding site is contributed by Arg334.

The protein belongs to the glutamine synthetase family. Oligomer of 12 subunits arranged in the form of two hexagons. In its feedback-inhibited form, interacts with TnrA in order to block its DNA-binding activity. Mg(2+) serves as cofactor.

The protein localises to the cytoplasm. The enzyme catalyses L-glutamate + NH4(+) + ATP = L-glutamine + ADP + phosphate + H(+). Inhibited by glutamine. In terms of biological role, glutamine synthetase (GS) is an unusual multitasking protein that functions as an enzyme, a transcription coregulator, and a chaperone in ammonium assimilation and in the regulation of genes involved in nitrogen metabolism. It catalyzes the ATP-dependent biosynthesis of glutamine from glutamate and ammonia. Feedback-inhibited GlnA also interacts with and regulates the activity of the transcriptional regulator TnrA. During nitrogen limitation, TnrA is in its DNA-binding active state and turns on the transcription of genes required for nitrogen assimilation. Under conditions of nitrogen excess, feedback-inhibited GlnA forms a stable complex with TnrA, which inhibits its DNA-binding activity. In contrast, feedback-inhibited GlnA acts as a chaperone to stabilize the DNA-binding activity of GlnR, which represses the transcription of nitrogen assimilation genes. This chain is Glutamine synthetase, found in Clostridium saccharobutylicum.